The following is a 382-amino-acid chain: F-box/kelch-repeat protein At3g16580 (382 aa).

Residues 9 to 55 enclose the F-box domain; that stretch reads WEFSLSLPWELIEEILSRVPPESLLRFKTVSKQWNALFRDKTFINNH. 2 Kelch repeats span residues 150-196 and 334-381; these read KIFA…NIYT and WIYV…AELQ.

The protein is F-box/kelch-repeat protein At3g16580 of Arabidopsis thaliana (Mouse-ear cress).